The following is an 86-amino-acid chain: Small ribosomal subunit protein bS18 (86 aa).

Residues 1 to 20 are disordered; sequence MSREEGNNGRRPGGKMRRSR.

The protein belongs to the bacterial ribosomal protein bS18 family. In terms of assembly, part of the 30S ribosomal subunit. Forms a tight heterodimer with protein bS6.

Its function is as follows. Binds as a heterodimer with protein bS6 to the central domain of the 16S rRNA, where it helps stabilize the platform of the 30S subunit. This Clostridium beijerinckii (strain ATCC 51743 / NCIMB 8052) (Clostridium acetobutylicum) protein is Small ribosomal subunit protein bS18.